The primary structure comprises 711 residues: Polyribonucleotide nucleotidyltransferase (711 aa).

Mg(2+) contacts are provided by Asp-490 and Asp-496. The KH domain occupies 556 to 615 (PRIETMQIPTDKIREVIGSGGKVIREIVEVSGAKVDINDEGIIKIASPNGEAIKKAYDMI). The S1 motif domain maps to 625–693 (GMVYTGTVVK…DRGKVRLSMK (69 aa)).

This sequence belongs to the polyribonucleotide nucleotidyltransferase family. The cofactor is Mg(2+).

It is found in the cytoplasm. The enzyme catalyses RNA(n+1) + phosphate = RNA(n) + a ribonucleoside 5'-diphosphate. Involved in mRNA degradation. Catalyzes the phosphorolysis of single-stranded polyribonucleotides processively in the 3'- to 5'-direction. This is Polyribonucleotide nucleotidyltransferase from Roseobacter denitrificans (strain ATCC 33942 / OCh 114) (Erythrobacter sp. (strain OCh 114)).